Reading from the N-terminus, the 3411-residue chain is MSGRKAQGKTLGVNMVRRGVRSLSNKIKQKTKQIGNRPGPSRGVQGFIFFFLFNILTGKKITAHLKRLWKMLDPRQGLAVLRKVKRVVASLMRGLSSRKRRSHDVLTVQFLILGMLLMTGGVTLVRKNRWLLLNVTSEDLGKTFSVGTGNCTTNILEAKYWCPDSMEYNCPNLSPREEPDDIDCWCYGVENVRVAYGKCDSAGRSRRSRRAIDLPTHENHGLKTRQEKWMTGRMGERQLQKIERWLVRNPFFAVTALTIAYLVGSNMTQRVVIALLVLAVGPAYSAHCIGITDRDFIEGVHGGTWVSATLEQDKCVTVMAPDKPSLDISLETVAIDGPAEARKVCYNAVLTHVKINDKCPSTGEAHLAEENEGDNACKRTYSDRGWGNGCGLFGKGSIVACAKFTCAKSMSLFEVDQTKIQYVIRAQLHVGAKQENWNTDIKTLKFDALSGSQEAEFTGYGKATLECQVQTAVDFGNSYIAEMEKESWIVDRQWAQDLTLPWQSGSGGVWREMHHLVEFEPPHAATIRVLALGNQEGSLKTALTGAMRVTKDTNDNNLYKLHGGHVSCRVKLSALTLKGTSYKMCTDKMSFVKNPTDTGHGTVVMQVKVPKGAPCKIPVIVADDLTAAINKGILVTVNPIASTNDDEVLIEVNPPFGDSYIIVGTGDSRLTYQWHKEGSSIGKLFTQTMKGAERLAVMGDAAWDFSSAGGFFTSVGKGIHTVFGSAFQGLFGGLNWITKVIMGAVLIWVGINTRNMTMSMSMILVGVIMMFLSLGVGADQGCAINFGKRELKCGDGIFIFRDSDDWLNKYSYYPEDPVKLASIVKASFEEGKCGLNSVDSLEHEMWRSRADEINAILEENEVDISVVVQDPKNVYQRGTHPFSRIRDGLQYGWKTWGKNLVFSPGRKNGSFIIDGKSRKECPFSNRVWNSFQIEEFGTGVFTTRVYMDAVFEYTIDCDGSILGAAVNGKKSAHGSPTFWMGSHEVNGTWMIHTLEALDYKECEWPLTHTIGTSVEESEMFMPRSIGGPVSSHNHIPGYKVQTNGPWMQVPLEVKREACPGTSVIIDGNCDGRGKSTRSTTDSGKIIPEWCCRSCTMPPVSFHGSDGCWYPMEIRPRKTHESHLVRSWVTAGEIHAVPFGLVSMMIAMEVVLRKRQGPKQMLVGGVVLLGAMLVGQVTLLDLLKLTVAVGLHFHEMNNGGDAMYMALIAAFSIRPGLLIGFGLRTLWSPRERLVLTLGAAMVEIALGGMMGGLWKYLNAVSLCILTINAVASRKASNTILPLMALLTPVTMAEVRLATMLFCTVVIIGVLHQNSKDTSMQKTIPLVALTLTSYLGLTQPFLGLCAFLATRIFGRRSIPVNEALAAAGLVGVLAGLAFQEMENFLGPIAVGGILMMLVSVAGRVDGLELKKLGEVSWEEEAEISGSSARYDVALSEQGEFKLLSEEKVPWDQVVMTSLALVGAAIHPFALLLVLAGWLFHVRGARRSGDVLWDIPTPKIIEECEHLEDGIYGIFQSTFLGASQRGVGVAQGGVFHTMWHVTRGAFLVRNGKKLIPSWASVKEDLVAYGGSWKLEGRWDGEEEVQLIAAVPGKNVVNVQTKPSLFKVRNGGEIGAVALDYPSGTSGSPIVNRNGEVIGLYGNGILVGDNSFVSAISQTEVKEEGKEELQEIPTMLKKGMTTILDFHPGAGKTRRFLPQILAECARRRLRTLVLAPTRVVLSEMKEAFHGLDVKFHTQAFSAHGSGREVIDAMCHATLTYRMLEPTRVVNWEVIIMDEAHFLDPASIAARGWAAHRARANESATILMTATPPGTSDEFPHSNGEIEDVQTDIPSEPWNTGHDWILADKRPTAWFLPSIRAANVMAASLRKAGKSVVVLNRKTFEREYPTIKQKKPDFILATDIAEMGANLCVERVLDCRTAFKPVLVDEGRKVAIKGPLRISASSAAQRRGRIGRNPNRDGDSYYYSEPTSEDNAHHVCWLEASMLLDNMEVRGGMVAPLYGVEGTKTPVSPGEMRLRDDQRKVFRELVRNCDLPVWLSWQVAKAGLKTNDRKWCFEGPEEHEILNDSGETVKCRAPGGAKKPLRPRWCDERVSSDQSALSEFIKFAEGRRGAAEVLVVLSELPDFLAKKGGEAMDTISVFLHSEEGSRAYRNALSMMPEAMTIVMLFILAGLLTSGMVIFFMSPKGISRMSMAMGTMAGCGYLMFLGGVKPTHISYIMLIFFVLMVVVIPEPGQQRSIQDNQVAYLIIGILTLVSVVAANELGMLEKTKEDLFGKKNLIPSSASPWSWPDLDLKPGAAWTVYVGIVTMLSPMLHHWIKVEYGNLSLSGIAQSASVLSFMDKGIPFMKMNISVIILLVSGWNSITVMPLLCGIGCAMLHWSLILPGIKAQQSKLAQRRVFHGVAKNPVVDGNPTVDIEEAPEMPALYEKKLALYLLLALSLASVAMCRTPFSLAEGIVLASAALGPLIEGNTSLLWNGPMAVSMTGVMRGNYYAFVGVMYNLWKMKTGRRGSANGKTLGEVWKRELNLLDKQQFELYKRTDIVEVDRDTARRHLAEGKVDTGVAVSRGTAKLRWFHERGYVKLEGRVIDLGCGRGGWCYYAAAQKEVSGVKGFTLGRDGHEKPMNVQSLGWNIITFKDKTDIHRLEPVKCDTLLCDIGESSSSSVTEGERTVRVLDTVEKWLACGVDNFCVKVLAPYMPDVLEKLELLQRRFGGTVIRNPLSRNSTHEMYYVSGARSNVTFTVNQTSRLLMRRMRRPTGKVTLEADVILPIGTRSVETDKGPLDKEAIEERVERIKSEYMTSWFYDNDNPYRTWHYCGSYVTKTSGSAASMVNGVIKILTYPWDRIEEVTRMAMTDTTPFGQQRVFKEKVDTRAKDPPAGTRKIMKVVNRWLFRHLAREKNPRLCTKEEFIAKVRSHAAIGAYLEEQEQWKTANEAVQDPKFWELVDEERKLHQQGRCRTCVYNMMGKREKKLSEFGKAKGSRAIWYMWLGARYLEFEALGFLNEDHWASRENSGGGVEGIGLQYLGYVIRDLAAMDGGGFYADDTAGWDTRITEADLDDEQEILNYMSPHHKKLAQAVMEMTYKNKVVKVLRPAPGGKAYMDVISRRDQRGSGQVVTYALNTITNLKVQLIRMAEAEMVIHHQHVQDCDESVLTRLEAWLTEHGCNRLKRMAVSGDDCVVRPIDDRFGLALSHLNAMSKVRKDISEWQPSKGWNDWENVPFCSHHFHELQLKDGRRIVVPCREQDELIGRGRVSPGNGWMIKETACLSKAYANMWSLMYFHKRDMRLLSLAVSSAVPTSWVPQGRTTWSIHGKGEWMTTEDMLEVWNRVWITNNPHMQDKTMVKEWRDVPYLTKRQDKLCGSLIGMTNRATWASHIHLVIHRIRTLIGQEKYTDYLTVMDRYSVDADLQPGELI.

Over 1–104 (MSGRKAQGKT…LSSRKRRSHD (104 aa)) the chain is Cytoplasmic. A hydrophobic; homodimerization of capsid protein C region spans residues 38–72 (PGPSRGVQGFIFFFLFNILTGKKITAHLKRLWKML). A propeptide spans 102–121 (SHDVLTVQFLILGMLLMTGG) (ER anchor for the capsid protein C, removed in mature form by serine protease NS3). Residues 105–125 (VLTVQFLILGMLLMTGGVTLV) form a helical membrane-spanning segment. At 126–244 (RKNRWLLLNV…GERQLQKIER (119 aa)) the chain is on the extracellular side. N-linked (GlcNAc...) asparagine; by host glycans are attached at residues N134 and N150. Residues 245–265 (WLVRNPFFAVTALTIAYLVGS) form a helical membrane-spanning segment. Over 266–270 (NMTQR) the chain is Cytoplasmic. Residues 271–285 (VVIALLVLAVGPAYS) form a helical membrane-spanning segment. At 286–730 (AHCIGITDRD…TVFGSAFQGL (445 aa)) the chain is on the extracellular side. 8 cysteine pairs are disulfide-bonded: C288–C315, C345–C401, C345–C406, C359–C390, C377–C401, C377–C406, C467–C568, and C585–C615. A fusion peptide region spans residues 383-396 (DRGWGNGCGLFGKG). Residues 731-751 (FGGLNWITKVIMGAVLIWVGI) traverse the membrane as a helical segment. The Extracellular segment spans residues 752-757 (NTRNMT). Residues 758–778 (MSMSMILVGVIMMFLSLGVGA) form a helical membrane-spanning segment. Residues 779–1132 (DQGCAINFGK…LVRSWVTAGE (354 aa)) are Extracellular-facing. 6 disulfides stabilise this stretch: C782–C793, C833–C921, C957–C1002, C1058–C1107, C1069–C1091, and C1090–C1094. N-linked (GlcNAc...) asparagine; by host glycosylation is found at N908 and N986. The helical transmembrane segment at 1133 to 1153 (IHAVPFGLVSMMIAMEVVLRK) threads the bilayer. Residues 1154-1201 (RQGPKQMLVGGVVLLGAMLVGQVTLLDLLKLTVAVGLHFHEMNNGGDA) are Cytoplasmic-facing. A helical transmembrane segment spans residues 1202-1222 (MYMALIAAFSIRPGLLIGFGL). Over 1223 to 1287 (RTLWSPRERL…ILPLMALLTP (65 aa)) the chain is Lumenal. Residues 1288-1308 (VTMAEVRLATMLFCTVVIIGV) form a helical membrane-spanning segment. Residues 1309-1355 (LHQNSKDTSMQKTIPLVALTLTSYLGLTQPFLGLCAFLATRIFGRRS) are Cytoplasmic-facing. Residues 1356–1376 (IPVNEALAAAGLVGVLAGLAF) form a helical membrane-spanning segment. Topologically, residues 1377 to 1378 (QE) are lumenal. The chain crosses the membrane as a helical span at residues 1379–1399 (MENFLGPIAVGGILMMLVSVA). Residues 1400-1456 (GRVDGLELKKLGEVSWEEEAEISGSSARYDVALSEQGEFKLLSEEKVPWDQVVMTSL) are Cytoplasmic-facing. The interval 1407–1446 (LKKLGEVSWEEEAEISGSSARYDVALSEQGEFKLLSEEKV) is interacts with and activates NS3 protease. Residues 1457–1477 (ALVGAAIHPFALLLVLAGWLF) constitute an intramembrane region (helical). The Cytoplasmic portion of the chain corresponds to 1478 to 2157 (HVRGARRSGD…RNALSMMPEA (680 aa)). The Peptidase S7 domain maps to 1485–1665 (SGDVLWDIPT…EVKEEGKEEL (181 aa)). Active-site charge relay system; for serine protease NS3 activity residues include H1537, D1561, and S1622. Positions 1669 to 1825 (PTMLKKGMTT…HSNGEIEDVQ (157 aa)) constitute a Helicase ATP-binding domain. Residues 1673–1676 (KKGM) form an important for RNA-binding region. 1682–1689 (FHPGAGKT) is a binding site for ATP. The DEAH box motif lies at 1773 to 1776 (DEAH). A Helicase C-terminal domain is found at 1820–1997 (EIEDVQTDIP…VRGGMVAPLY (178 aa)). K1877 carries the post-translational modification N6-acetyllysine; by host. The disordered stretch occupies residues 1942–1961 (AAQRRGRIGRNPNRDGDSYY). Residues 2158–2178 (MTIVMLFILAGLLTSGMVIFF) form a helical membrane-spanning segment. Residues 2179–2186 (MSPKGISR) are Lumenal-facing. The helical intramembrane region spans 2187–2207 (MSMAMGTMAGCGYLMFLGGVK). Residues 2208 to 2209 (PT) are Lumenal-facing. A helical membrane pass occupies residues 2210–2230 (HISYIMLIFFVLMVVVIPEPG). Over 2231–2241 (QQRSIQDNQVA) the chain is Cytoplasmic. A helical transmembrane segment spans residues 2242–2262 (YLIIGILTLVSVVAANELGML). Residues 2263-2293 (EKTKEDLFGKKNLIPSSASPWSWPDLDLKPG) lie on the Lumenal side of the membrane. The segment at residues 2294 to 2314 (AAWTVYVGIVTMLSPMLHHWI) is an intramembrane region (helical). Over 2315-2360 (KVEYGNLSLSGIAQSASVLSFMDKGIPFMKMNISVIILLVSGWNSI) the chain is Lumenal. The chain crosses the membrane as a helical span at residues 2361–2380 (TVMPLLCGIGCAMLHWSLIL). At 2381-2421 (PGIKAQQSKLAQRRVFHGVAKNPVVDGNPTVDIEEAPEMPA) the chain is on the cytoplasmic side. Residues 2422 to 2442 (LYEKKLALYLLLALSLASVAM) form a helical membrane-spanning segment. The Lumenal portion of the chain corresponds to 2443–2445 (CRT). A helical transmembrane segment spans residues 2446–2466 (PFSLAEGIVLASAALGPLIEG). Over 2467-3411 (NTSLLWNGPM…DADLQPGELI (945 aa)) the chain is Cytoplasmic. The mRNA cap 0-1 NS5-type MT domain occupies 2507 to 2771 (GSANGKTLGE…DVILPIGTRS (265 aa)). S2562 provides a ligand contact to S-adenosyl-L-methionine. A Phosphoserine modification is found at S2562. The active-site For 2'-O-MTase activity is the K2567. S-adenosyl-L-methionine contacts are provided by G2592, W2593, T2610, L2611, D2637, and I2638. The active-site For 2'-O-MTase activity is D2652. Position 2653 (I2653) interacts with S-adenosyl-L-methionine. Active-site for 2'-O-MTase activity residues include K2688 and E2724. An S-adenosyl-L-methionine-binding site is contributed by Y2726. The Nuclear localization signal motif lies at 2878–2911 (RKIMKVVNRWLFRHLAREKNPRLCTKEEFIAKVR). Zn(2+)-binding residues include E2945, H2949, C2954, and C2957. The 153-residue stretch at 3035 to 3187 (GGFYADDTAG…RPIDDRFGLA (153 aa)) folds into the RdRp catalytic domain. Residues H3222, C3238, and C3357 each coordinate Zn(2+).

This sequence in the N-terminal section; belongs to the class I-like SAM-binding methyltransferase superfamily. mRNA cap 0-1 NS5-type methyltransferase family. Homodimer. Interacts (via N-terminus) with host EXOC1 (via C-terminus); this interaction results in EXOC1 degradation through the proteasome degradation pathway. In terms of assembly, forms heterodimers with envelope protein E in the endoplasmic reticulum and Golgi. As to quaternary structure, homodimer; in the endoplasmic reticulum and Golgi. Interacts with protein prM. Interacts with non-structural protein 1. Homodimer; Homohexamer when secreted. Interacts with envelope protein E. NS1 interacts with NS4B. Interacts with host complement protein CFH; this interaction leads to the degradation of C3. In terms of assembly, interacts (via N-terminus) with serine protease NS3. As to quaternary structure, forms a heterodimer with serine protease NS3. May form homooligomers. Forms a heterodimer with NS2B. Interacts with non-structural protein 2A (via N-terminus). Interacts with NS4B. Interacts with unphosphorylated RNA-directed RNA polymerase NS5; this interaction stimulates RNA-directed RNA polymerase NS5 guanylyltransferase activity. NS3 interacts with host PDCD6IP; this interaction contributes to virion release. In terms of assembly, interacts with serine protease NS3. As to quaternary structure, homodimer. Interacts with host STAT2; this interaction prevents the establishment of cellular antiviral state. Interacts with serine protease NS3. Interacts with host TRIM23; this interaction leads to NS5 ubiquitination. In terms of processing, specific enzymatic cleavages in vivo yield mature proteins. The nascent capsid protein C contains a C-terminal hydrophobic domain that act as a signal sequence for translocation of prM into the lumen of the ER. Mature capsid protein C is cleaved at a site upstream of this hydrophobic domain by NS3. prM is cleaved in post-Golgi vesicles by a host furin, releasing the mature small envelope protein M, and peptide pr. Non-structural protein 2A-alpha, a C-terminally truncated form of non-structural protein 2A, results from partial cleavage by NS3. Specific enzymatic cleavages in vivo yield mature proteins peptide 2K acts as a signal sequence and is removed from the N-terminus of NS4B by the host signal peptidase in the ER lumen. Signal cleavage at the 2K-4B site requires a prior NS3 protease-mediated cleavage at the 4A-2K site. Cleaved in post-Golgi vesicles by a host furin, releasing the mature small envelope protein M, and peptide pr. This cleavage is incomplete as up to 30% of viral particles still carry uncleaved prM. Post-translationally, N-glycosylated. In terms of processing, N-glycosylated. The excreted form is glycosylated and this is required for efficient secretion of the protein from infected cells. Polyubiquitinated; ubiquitination is probably mediated by host TRIM23 and is prerequisite for NS5-STAT2 interaction. NS5 is not ISGylated or sumoylated. Post-translationally, acetylated by host KAT5. Acetylation modulates NS3 RNA-binding and unwinding activities and plays an important positive role for viral replication. In terms of processing, phosphorylated on serines residues. This phosphorylation may trigger NS5 nuclear localization.

Its subcellular location is the virion. The protein localises to the host nucleus. The protein resides in the host cytoplasm. It is found in the host perinuclear region. It localises to the secreted. Its subcellular location is the virion membrane. The protein localises to the host endoplasmic reticulum membrane. The catalysed reaction is Selective hydrolysis of -Xaa-Xaa-|-Yaa- bonds in which each of the Xaa can be either Arg or Lys and Yaa can be either Ser or Ala.. The enzyme catalyses RNA(n) + a ribonucleoside 5'-triphosphate = RNA(n+1) + diphosphate. It catalyses the reaction a ribonucleoside 5'-triphosphate + H2O = a ribonucleoside 5'-diphosphate + phosphate + H(+). It carries out the reaction ATP + H2O = ADP + phosphate + H(+). The catalysed reaction is a 5'-end (5'-triphosphoguanosine)-ribonucleoside in mRNA + S-adenosyl-L-methionine = a 5'-end (N(7)-methyl 5'-triphosphoguanosine)-ribonucleoside in mRNA + S-adenosyl-L-homocysteine. The enzyme catalyses a 5'-end (N(7)-methyl 5'-triphosphoguanosine)-ribonucleoside in mRNA + S-adenosyl-L-methionine = a 5'-end (N(7)-methyl 5'-triphosphoguanosine)-(2'-O-methyl-ribonucleoside) in mRNA + S-adenosyl-L-homocysteine + H(+). In terms of biological role, plays a role in virus budding by binding to the cell membrane and gathering the viral RNA into a nucleocapsid that forms the core of a mature virus particle. During virus entry, may induce genome penetration into the host cytoplasm after hemifusion induced by the surface proteins. Can migrate to the cell nucleus where it modulates host functions. Inhibits RNA silencing by interfering with host Dicer. Its function is as follows. Prevents premature fusion activity of envelope proteins in trans-Golgi by binding to envelope protein E at pH6.0. After virion release in extracellular space, gets dissociated from E dimers. Functionally, acts as a chaperone for envelope protein E during intracellular virion assembly by masking and inactivating envelope protein E fusion peptide. prM is the only viral peptide matured by host furin in the trans-Golgi network probably to avoid catastrophic activation of the viral fusion activity in acidic Golgi compartment prior to virion release. prM-E cleavage is inefficient, and many virions are only partially matured. These uncleaved prM would play a role in immune evasion. In terms of biological role, may play a role in virus budding. Exerts cytotoxic effects by activating a mitochondrial apoptotic pathway through M ectodomain. May display a viroporin activity. Binds to host cell surface receptor and mediates fusion between viral and cellular membranes. Envelope protein is synthesized in the endoplasmic reticulum in the form of heterodimer with protein prM. They play a role in virion budding in the ER, and the newly formed immature particle is covered with 60 spikes composed of heterodimer between precursor prM and envelope protein E. The virion is transported to the Golgi apparatus where the low pH causes dissociation of PrM-E heterodimers and formation of E homodimers. prM-E cleavage is inefficient, and many virions are only partially matured. These uncleaved prM would play a role in immune evasion. Its function is as follows. Involved in immune evasion, pathogenesis and viral replication. Once cleaved off the polyprotein, is targeted to three destinations: the viral replication cycle, the plasma membrane and the extracellular compartment. Essential for viral replication. Required for formation of the replication complex and recruitment of other non-structural proteins to the ER-derived membrane structures. Excreted as a hexameric lipoparticle that plays a role against host immune response. Antagonizing the complement function. Binds to the host macrophages and dendritic cells. Inhibits signal transduction originating from Toll-like receptor 3 (TLR3). Functionally, component of the viral RNA replication complex that functions in virion assembly and antagonizes the host immune response. In terms of biological role, required cofactor for the serine protease function of NS3. May have membrane-destabilizing activity and form viroporins. Displays three enzymatic activities: serine protease, NTPase and RNA helicase. NS3 serine protease, in association with NS2B, performs its autocleavage and cleaves the polyprotein at dibasic sites in the cytoplasm: C-prM, NS2A-NS2B, NS2B-NS3, NS3-NS4A, NS4A-2K and NS4B-NS5. NS3 RNA helicase binds RNA and unwinds dsRNA in the 3' to 5' direction. Also plays a role in virus assembly. Its function is as follows. Regulates the ATPase activity of the NS3 helicase activity. NS4A allows NS3 helicase to conserve energy during unwinding. Functionally, functions as a signal peptide for NS4B and is required for the interferon antagonism activity of the latter. In terms of biological role, induces the formation of ER-derived membrane vesicles where the viral replication takes place. Inhibits interferon (IFN)-induced host STAT1 phosphorylation and nuclear translocation, thereby preventing the establishment of cellular antiviral state by blocking the IFN-alpha/beta pathway. Replicates the viral (+) and (-) RNA genome, and performs the capping of genomes in the cytoplasm. NS5 methylates viral RNA cap at guanine N-7 and ribose 2'-O positions. Besides its role in RNA genome replication, also prevents the establishment of cellular antiviral state by blocking the interferon-alpha/beta (IFN-alpha/beta) signaling pathway. IFN-I induces binding of NS5 to host IFN-activated transcription factor STAT2, preventing its transcriptional activity. Host TRIM23 is the E3 ligase that interacts with and polyubiquitinates NS5 to promote its binding to STAT2 and trigger IFN-I signaling inhibition. The protein is Genome polyprotein of Yellow fever virus (strain Ghana/Asibi/1927) (YFV).